The following is a 576-amino-acid chain: Cyclic nucleotide-binding domain-containing protein 2 (576 aa).

A nucleoside 3',5'-cyclic phosphate is bound at residue 116 to 239; it reads SYRNYAEPLQ…DAQYRFEFFR (124 aa).

Its subcellular location is the cytoplasm. The protein resides in the cytosol. Functionally, essential for male fertility. Plays an important role in spermatogenesis and regulates sperm motility by controlling the development of the flagellar bending of sperm. The protein is Cyclic nucleotide-binding domain-containing protein 2 (CNBD2) of Homo sapiens (Human).